Consider the following 492-residue polypeptide: Stage IV sporulation protein A (492 aa).

A Walker A motif; involved in ATP-binding motif is present at residues glycine 24–serine 31. Residue glycine 24–serine 31 coordinates ATP.

The protein resides in the cytoplasm. It carries out the reaction ATP + H2O = ADP + phosphate + H(+). Functionally, ATPase. Has a role at an early stage in the morphogenesis of the spore coat outer layers. Directs the assembly of the coat and exosporium to an area around the forespore. The chain is Stage IV sporulation protein A from Bacillus anthracis.